The sequence spans 156 residues: MKLEVCSYSGFKVYPGHGKRVIRVDGRSFYFINKKSERSHYLKRNPREISWTVLYRRKYKKGMSEEQTKNELSVLTKTARGIAGASLAEIMAKRNQKPEVRKAMRDQAIRAAKEKQKQKELEKKAKKVEKKKPTLAPKQKAAKITQKPAPRVGGKR.

Over residues 110-123 the composition is skewed to basic and acidic residues; the sequence is RAAKEKQKQKELEK. The segment at 110–156 is disordered; that stretch reads RAAKEKQKQKELEKKAKKVEKKKPTLAPKQKAAKITQKPAPRVGGKR.

This sequence belongs to the eukaryotic ribosomal protein eL24 family.

The chain is Large ribosomal subunit protein eL24 (RPL24) from Schistosoma japonicum (Blood fluke).